The primary structure comprises 224 residues: Urease accessory protein UreF (224 aa).

Belongs to the UreF family. UreD, UreF and UreG form a complex that acts as a GTP-hydrolysis-dependent molecular chaperone, activating the urease apoprotein by helping to assemble the nickel containing metallocenter of UreC. The UreE protein probably delivers the nickel.

The protein localises to the cytoplasm. Its function is as follows. Required for maturation of urease via the functional incorporation of the urease nickel metallocenter. In Pseudomonas entomophila (strain L48), this protein is Urease accessory protein UreF.